A 339-amino-acid polypeptide reads, in one-letter code: Malate/(S)-sulfolactate dehydrogenase (339 aa).

It belongs to the LDH2/MDH2 oxidoreductase family. Homodimer.

Its subcellular location is the cytoplasm. The catalysed reaction is (S)-malate + NAD(+) = oxaloacetate + NADH + H(+). It carries out the reaction (S)-malate + NADP(+) = oxaloacetate + NADPH + H(+). It catalyses the reaction (2S)-3-sulfolactate + NAD(+) = 3-sulfopyruvate + NADH + H(+). Functionally, acts on oxaloacetate, sulfopyruvate but not on pyruvate. Has a higher selectivity for the coenzyme NADH than for NADPH. In Methanothermus fervidus (strain ATCC 43054 / DSM 2088 / JCM 10308 / V24 S), this protein is Malate/(S)-sulfolactate dehydrogenase (mdh).